The chain runs to 114 residues: Protein LLP homolog (114 aa).

2 stretches are compositionally biased toward basic residues: residues 1 to 21 (MAKS…RKKN) and 91 to 108 (QRKK…KSKL). Disordered regions lie at residues 1-23 (MAKS…KNAP) and 91-114 (QRKK…GLAW).

Belongs to the learning-associated protein family.

Its subcellular location is the nucleus. The protein localises to the nucleolus. It is found in the chromosome. In terms of biological role, regulates dendritic and spine growth and synaptic transmission. This is Protein LLP homolog (LLPH) from Gallus gallus (Chicken).